Consider the following 339-residue polypeptide: 1-aminocyclopropane-1-carboxylate deaminase (339 aa).

An N6-(pyridoxal phosphate)lysine modification is found at Lys-52. The active-site Nucleophile is the Ser-79.

This sequence belongs to the ACC deaminase/D-cysteine desulfhydrase family. Homotrimer. It depends on pyridoxal 5'-phosphate as a cofactor.

It catalyses the reaction 1-aminocyclopropane-1-carboxylate + H2O = 2-oxobutanoate + NH4(+). In terms of biological role, catalyzes a cyclopropane ring-opening reaction, the irreversible conversion of 1-aminocyclopropane-1-carboxylate (ACC) to ammonia and alpha-ketobutyrate. Allows growth on ACC as a nitrogen source. This Bradyrhizobium sp. (strain ORS 278) protein is 1-aminocyclopropane-1-carboxylate deaminase.